The following is a 447-amino-acid chain: GTPase Der (447 aa).

2 EngA-type G domains span residues 4–165 (QIIT…PEEE) and 180–357 (LQIV…KIWN). Residues 10 to 17 (GRPNVGKS), 57 to 61 (DTPGL), 119 to 122 (NKCE), 186 to 193 (GRPNAGKS), 233 to 237 (DTAGL), and 298 to 301 (NKWD) each bind GTP. The region spanning 358-443 (KKITTSKLNE…PIRFIYVKTK (86 aa)) is the KH-like domain.

This sequence belongs to the TRAFAC class TrmE-Era-EngA-EngB-Septin-like GTPase superfamily. EngA (Der) GTPase family. As to quaternary structure, associates with the 50S ribosomal subunit.

Its function is as follows. GTPase that plays an essential role in the late steps of ribosome biogenesis. This is GTPase Der from Rickettsia conorii (strain ATCC VR-613 / Malish 7).